The following is a 155-amino-acid chain: DNA gyrase inhibitor (155 aa).

The protein belongs to the DNA gyrase inhibitor family. In terms of assembly, interacts with DNA gyrase.

It is found in the cytoplasm. In terms of biological role, inhibits the supercoiling activity of DNA gyrase. Acts by inhibiting DNA gyrase at an early step, prior to (or at the step of) binding of DNA by the gyrase. It protects cells against toxins that target DNA gyrase, by inhibiting activity of these toxins and reducing the formation of lethal double-strand breaks in the cell. This Edwardsiella ictaluri (strain 93-146) protein is DNA gyrase inhibitor.